Consider the following 383-residue polypeptide: ATP phosphoribosyltransferase regulatory subunit (383 aa).

The protein belongs to the class-II aminoacyl-tRNA synthetase family. HisZ subfamily. In terms of assembly, heteromultimer composed of HisG and HisZ subunits.

Its subcellular location is the cytoplasm. It functions in the pathway amino-acid biosynthesis; L-histidine biosynthesis; L-histidine from 5-phospho-alpha-D-ribose 1-diphosphate: step 1/9. Required for the first step of histidine biosynthesis. May allow the feedback regulation of ATP phosphoribosyltransferase activity by histidine. The polypeptide is ATP phosphoribosyltransferase regulatory subunit (Lactiplantibacillus plantarum (strain ATCC BAA-793 / NCIMB 8826 / WCFS1) (Lactobacillus plantarum)).